The primary structure comprises 77 residues: Dermatoxin-S1 (77 aa).

Positions 1–22 are cleaved as a signal peptide; the sequence is MAFLKKSLFLILFLGLVPLSFC. Positions 23 to 44 are excised as a propeptide; that stretch reads ENDKREGENEEEQDDDQSEEKR. A Glutamine amide modification is found at Gln-76.

As to expression, expressed by the skin glands.

It is found in the secreted. The protein localises to the target cell membrane. Functionally, antimicrobial peptide with potent activity against Gram-positive bacteria B.megaterium, C.glutamicum and S.aureus and mollicutes A.laidlawii and S.melliferum. Less active against Gram-negative bacteria B.cepacia, P.aeruginosa, S.typhimurium and S.meliloti. Probably acts by disturbing membrane functions with its amphipathic structure. This chain is Dermatoxin-S1, found in Phyllomedusa sauvagei (Sauvage's leaf frog).